Reading from the N-terminus, the 441-residue chain is Myocyte-specific enhancer factor 2C (441 aa).

Residues 1–61 (MGRKKIQITR…NKLFQYASTD (61 aa)) enclose the MADS-box domain. The residue at position 4 (lysine 4) is an N6-acetyllysine. Residues 58–86 (ASTDMDKVLLKYTEYNEPHESRTNSDIVE) constitute a DNA-binding region (mef2-type). Phosphoserine; by CK2 is present on serine 59. The segment at 91–116 (KGLNGCDSPDPDADDSVGHSPESEDK) is disordered. Serine 98, serine 106, and serine 110 each carry phosphoserine. An N6-acetyllysine mark is found at lysine 116 and lysine 119. A disordered region spans residues 180–224 (NSMSPGVTHRPPSAGNTGGLMGGDLTSGAGTSAGNGYGNPRNSPG). Phosphoserine is present on residues serine 222 and serine 228. Lysine 234 and lysine 239 each carry N6-acetyllysine. A Phosphoserine modification is found at serine 240. N6-acetyllysine occurs at positions 252 and 264. Residues 271 to 278 (SEDVDLLL) form a beta domain region. 2 positions are modified to phosphothreonine; by MAPK7 and MAPK14: threonine 293 and threonine 300. The interval 353–441 (QHLHSMPPSA…RMRLSEGWAT (89 aa)) is disordered. Residues 362–377 (ALSQLGDRTTTPSRYP) show a composition bias toward polar residues. Position 387 is a phosphoserine; by MAPK7 (serine 387). A compositionally biased stretch (low complexity) spans 387 to 400 (SPVDSLSSCSSSYD). The segment covering 401–411 (GSDREDHRNEF) has biased composition (basic and acidic residues). Position 413 is a phosphoserine (serine 413).

Belongs to the MEF2 family. Forms a complex with class II HDACs in undifferentiating cells. On myogenic differentiation, HDACs are released into the cytoplasm allowing MEF2s to interact with other proteins for activation. Interacts with EP300 in differentiating cells; the interaction acetylates MEF2C leading to increased DNA binding and activation. Interacts with HDAC7 and CARM1. Interacts with HDAC4, HDAC7 and HDAC9; the interaction with HDACs represses transcriptional activity. Interacts with LPIN1. Interacts with MYOCD. Interacts with AKAP13. Interacts with FOXK1; the interaction inhibits MEF2C transactivation activity. Interacts (via N-terminus) with HABP4; this interaction decreases DNA-binding activity of MEF2C in myocardial cells in response to mechanical stress. Interacts with JPH2; interaction specifically takes place with the Junctophilin-2 N-terminal fragment cleavage product of JPH2. Interacts (via MADS box) with SOX18. Interacts with PHF7; the interaction promotes MEF2C binding to its transcription targets. Post-translationally, phosphorylation on Ser-59 enhances DNA binding activity. In terms of processing, acetylated by p300 on several sites in diffentiating myocytes. Acetylation on Lys-4 increases DNA binding and transactivation. Proteolytically cleaved in cerebellar granule neurons, probably by caspase 7, following neurotoxicity.

It is found in the nucleus. It localises to the cytoplasm. The protein localises to the sarcoplasm. Its function is as follows. Transcription activator which binds specifically to the MEF2 element present in the regulatory regions of many muscle-specific genes. Controls cardiac morphogenesis and myogenesis, and is also involved in vascular development. Enhances transcriptional activation mediated by SOX18. Plays an essential role in hippocampal-dependent learning and memory by suppressing the number of excitatory synapses and thus regulating basal and evoked synaptic transmission. Crucial for normal neuronal development, distribution, and electrical activity in the neocortex. Necessary for proper development of megakaryocytes and platelets and for bone marrow B-lymphopoiesis. Required for B-cell survival and proliferation in response to BCR stimulation, efficient IgG1 antibody responses to T-cell-dependent antigens and for normal induction of germinal center B-cells. May also be involved in neurogenesis and in the development of cortical architecture. The chain is Myocyte-specific enhancer factor 2C from Bos taurus (Bovine).